The chain runs to 445 residues: WD repeat domain phosphoinositide-interacting protein 2 (445 aa).

The stretch at 182–222 (AHDSPLAALAFDASGTKLATASEKGTVIRVFSIPEGQKLFE) is one WD 1 repeat. The L/FRRG motif motif lies at 223 to 226 (FRRG). WD repeat units follow at residues 228-267 (KRCV…EKPP) and 311-349 (GHKN…GGEC). Position 395 is a phosphoserine (Ser395).

It belongs to the WD repeat PROPPIN family. As to quaternary structure, interacts with TECPR1. Interacts with ATG16L1. Interacts with ATG5. Interacts with WIPI1. Interacts with WDR45. May interact with NUDC. Interacts with ULK1 and RB1CC1.

It localises to the preautophagosomal structure membrane. In terms of biological role, component of the autophagy machinery that controls the major intracellular degradation process by which cytoplasmic materials are packaged into autophagosomes and delivered to lysosomes for degradation. Involved in an early step of the formation of preautophagosomal structures. Binds and is activated by phosphatidylinositol 3-phosphate (PtdIns3P) forming on membranes of the endoplasmic reticulum upon activation of the upstream ULK1 and PI3 kinases. Mediates ER-isolation membranes contacts by interacting with the ULK1:RB1CC1 complex and PtdIns3P. Once activated, WIPI2 recruits at phagophore assembly sites the ATG12-ATG5-ATG16L1 complex that directly controls the elongation of the nascent autophagosomal membrane. This chain is WD repeat domain phosphoinositide-interacting protein 2, found in Mus musculus (Mouse).